Consider the following 314-residue polypeptide: Deoxymugineic acid synthase 1-B (314 aa).

A disordered region spans residues 1–22 (MGAGDKTAAGMPRIGMGTAVQG). Asp-44 provides a ligand contact to NADP(+). The Proton donor role is filled by Tyr-49. Residue His-112 coordinates substrate. Residues 158–159 (AN), Gln-180, 258–266 (FDEARMREN), and 273–281 (ELTEEERRR) each bind NADP(+).

This sequence belongs to the aldo/keto reductase family. Mostly expressed in root tissues, observed in mesocotyl and embryonic roots, seedling roots, crown and seedling leafes, mature bracts, anthers, pistil, caryopsis and embryos.

It catalyses the reaction 2'-deoxymugineate + NAD(+) = 3''-deamino-3''-oxonicotianamine + NADH + H(+). It carries out the reaction 2'-deoxymugineate + NADP(+) = 3''-deamino-3''-oxonicotianamine + NADPH + H(+). It participates in siderophore biosynthesis. Its function is as follows. Catalyzes the reduction of a 3''-keto intermediate during the biosynthesis of 2'-deoxymugineic acid (DMA) from L-Met. Involved in the formation of phytosiderophores (MAs) belonging to the mugineic acid family and required to acquire iron. The protein is Deoxymugineic acid synthase 1-B of Triticum aestivum (Wheat).